We begin with the raw amino-acid sequence, 403 residues long: Solanesyl-diphosphate synthase 2, chloroplastic (403 aa).

A chloroplast-targeting transit peptide spans 1-62; the sequence is MLSVSCPRVY…QPGLAAVDVP (62 aa). Residues K123, R126, and H161 each contribute to the isopentenyl diphosphate site. Mg(2+) is bound by residues D168 and D172. R177 contributes to the an all-trans-polyprenyl diphosphate binding site. Isopentenyl diphosphate is bound at residue R178. Positions 254, 255, 292, and 309 each coordinate an all-trans-polyprenyl diphosphate.

Belongs to the FPP/GGPP synthase family. As to quaternary structure, homodimer. Interacts with FBN5. Mg(2+) is required as a cofactor. As to expression, expressed in leaves, stems and roots. Highest expression in leaves and roots.

The protein resides in the plastid. It localises to the chloroplast. It catalyses the reaction 7 isopentenyl diphosphate + (2E)-geranyl diphosphate = all-trans-nonaprenyl diphosphate + 7 diphosphate. Involved in providing solanesyl diphosphate for plastoquinone-9 (PQ-9) formation. Geranyl diphosphate is the preferred substrate. This is Solanesyl-diphosphate synthase 2, chloroplastic from Oryza sativa subsp. japonica (Rice).